The chain runs to 325 residues: dITP/XTP pyrophosphatase (325 aa).

The unknown stretch occupies residues 1 to 128; sequence MKEKIYEYKD…KKVSELGDTI (128 aa). The segment at 129 to 324 is NTP pyrophosphatase; it reads LIATRNEGKT…MEVFPAWQNA (196 aa). 132–137 is a substrate binding site; that stretch reads TRNEGK. Residues glutamate 165 and aspartate 194 each coordinate Mg(2+). Aspartate 194 acts as the Proton acceptor in catalysis. Residues serine 195, 278 to 281, lysine 301, and 306 to 307 contribute to the substrate site; these read FGYD and HR.

The protein belongs to the HAM1 NTPase family. Homodimer. Mg(2+) serves as cofactor.

It carries out the reaction XTP + H2O = XMP + diphosphate + H(+). The enzyme catalyses dITP + H2O = dIMP + diphosphate + H(+). It catalyses the reaction ITP + H2O = IMP + diphosphate + H(+). Functionally, pyrophosphatase that catalyzes the hydrolysis of nucleoside triphosphates to their monophosphate derivatives, with a high preference for the non-canonical purine nucleotides XTP (xanthosine triphosphate), dITP (deoxyinosine triphosphate) and ITP. Seems to function as a house-cleaning enzyme that removes non-canonical purine nucleotides from the nucleotide pool, thus preventing their incorporation into DNA/RNA and avoiding chromosomal lesions. The sequence is that of dITP/XTP pyrophosphatase from Streptococcus mutans serotype c (strain ATCC 700610 / UA159).